Reading from the N-terminus, the 273-residue chain is 2,3,4,5-tetrahydropyridine-2,6-dicarboxylate N-succinyltransferase (273 aa).

Substrate-binding residues include R104 and D141.

The protein belongs to the transferase hexapeptide repeat family. In terms of assembly, homotrimer.

It localises to the cytoplasm. The enzyme catalyses (S)-2,3,4,5-tetrahydrodipicolinate + succinyl-CoA + H2O = (S)-2-succinylamino-6-oxoheptanedioate + CoA. The protein operates within amino-acid biosynthesis; L-lysine biosynthesis via DAP pathway; LL-2,6-diaminopimelate from (S)-tetrahydrodipicolinate (succinylase route): step 1/3. The sequence is that of 2,3,4,5-tetrahydropyridine-2,6-dicarboxylate N-succinyltransferase from Neisseria gonorrhoeae (strain ATCC 700825 / FA 1090).